The chain runs to 195 residues: Peptidyl-tRNA hydrolase (195 aa).

Tyrosine 18 contacts tRNA. The Proton acceptor role is filled by histidine 23. Positions 69, 71, and 117 each coordinate tRNA.

Belongs to the PTH family. In terms of assembly, monomer.

Its subcellular location is the cytoplasm. The enzyme catalyses an N-acyl-L-alpha-aminoacyl-tRNA + H2O = an N-acyl-L-amino acid + a tRNA + H(+). Functionally, hydrolyzes ribosome-free peptidyl-tRNAs (with 1 or more amino acids incorporated), which drop off the ribosome during protein synthesis, or as a result of ribosome stalling. Its function is as follows. Catalyzes the release of premature peptidyl moieties from peptidyl-tRNA molecules trapped in stalled 50S ribosomal subunits, and thus maintains levels of free tRNAs and 50S ribosomes. This Alcanivorax borkumensis (strain ATCC 700651 / DSM 11573 / NCIMB 13689 / SK2) protein is Peptidyl-tRNA hydrolase.